The sequence spans 344 residues: KRR1 small subunit processome component homolog (344 aa).

Residues 126-194 (DIIKIGNLVH…VRDIVLDTMN (69 aa)) form the KH domain. The span at 230 to 246 (KNKNISKRKQPKNKKPK) shows a compositional bias: basic residues. Residues 230-326 (KNKNISKRKQ…KRAAEDNKVD (97 aa)) form a disordered region. A coiled-coil region spans residues 271–344 (FLNKEQKQAK…MKANKKKERS (74 aa)). Basic and acidic residues predominate over residues 272 to 303 (LNKEQKQAKRQQERTAKQAEAAKKQDERRNKD).

It belongs to the KRR1 family. Monomer. Component of the ribosomal small subunit (SSU) processome.

It is found in the nucleus. The protein localises to the nucleolus. Its function is as follows. Required for 40S ribosome biogenesis. Involved in nucleolar processing of pre-18S ribosomal RNA and ribosome assembly. Binds to RNA. Required for female germline development, cell viability during eye development and for survival of dividing cells and epithelial cells during early wing disk development. This Drosophila mojavensis (Fruit fly) protein is KRR1 small subunit processome component homolog.